Here is a 429-residue protein sequence, read N- to C-terminus: 3-phosphoshikimate 1-carboxyvinyltransferase (429 aa).

The 3-phosphoshikimate site is built by Lys-20, Ser-21, and Arg-25. Residue Lys-20 coordinates phosphoenolpyruvate. Positions 89 and 118 each coordinate phosphoenolpyruvate. 3-phosphoshikimate contacts are provided by Ser-164, Ser-165, Gln-166, Ser-192, Asp-311, and Lys-338. Residue Gln-166 coordinates phosphoenolpyruvate. Asp-311 acts as the Proton acceptor in catalysis. Arg-342 and Arg-384 together coordinate phosphoenolpyruvate.

The protein belongs to the EPSP synthase family. In terms of assembly, monomer.

It is found in the cytoplasm. It carries out the reaction 3-phosphoshikimate + phosphoenolpyruvate = 5-O-(1-carboxyvinyl)-3-phosphoshikimate + phosphate. The protein operates within metabolic intermediate biosynthesis; chorismate biosynthesis. Catalyzes the transfer of the enolpyruvyl moiety of phosphoenolpyruvate (PEP) to the 5-hydroxyl of shikimate-3-phosphate (S3P) to produce enolpyruvyl shikimate-3-phosphate and inorganic phosphate. The protein is 3-phosphoshikimate 1-carboxyvinyltransferase of Methanococcus maripaludis (strain C5 / ATCC BAA-1333).